The following is a 348-amino-acid chain: Rhodopsin (348 aa).

An N-acetylmethionine modification is found at M1. Residues 1 to 36 (MNGTEGPNFYVPFSNKTGVVRSPFEYPQYYLAEPWQ) lie on the Extracellular side of the membrane. N-linked (GlcNAc...) asparagine glycosylation is found at N2 and N15. A helical transmembrane segment spans residues 37 to 61 (FSMLAAYMFLLIVLGFPINFLTLYV). Topologically, residues 62–73 (TVQHKKLRTPLN) are cytoplasmic. Residues 74 to 96 (YILLNLAVADLFMVFGGFTTTLY) traverse the membrane as a helical segment. Topologically, residues 97-110 (TSLHGYFVFGPTGC) are extracellular. C110 and C187 form a disulfide bridge. Residues 111 to 133 (NVEGFFATLGGEIALWSLVVLAI) form a helical membrane-spanning segment. The 'Ionic lock' involved in activated form stabilization motif lies at 134–136 (ERY). Over 134 to 152 (ERYVVVCKPMSNFRFGENH) the chain is Cytoplasmic. A helical transmembrane segment spans residues 153–173 (AIMGVAFTWVMALACAAPPLA). Topologically, residues 174-202 (GWSRYIPEGMQCSCGIDYYTLKPEVNNES) are extracellular. Position 201 (E201) interacts with Zn(2+). A helical membrane pass occupies residues 203 to 224 (FVIYMFVVHFTIPMIVIFFCYG). Residues 225–252 (QLVFTVKEAAAQQQESATTQKAEKEVTR) are Cytoplasmic-facing. Residues 253–274 (MVIIMVIAFLICWVPYASVAFY) form a helical membrane-spanning segment. The Extracellular portion of the chain corresponds to 275–286 (IFTHQGSNFGPI). A Zn(2+)-binding site is contributed by Q279. The helical transmembrane segment at 287-308 (FMTLPAFFAKSASIYNPVIYIM) threads the bilayer. Position 296 is an N6-(retinylidene)lysine (K296). Topologically, residues 309–348 (MNKQFRNCMLTTICCGKNPFAEEEGATTVSKTETSQVAPA) are cytoplasmic. 2 S-palmitoyl cysteine lipidation sites follow: C322 and C323. An interaction with SAG region spans residues 330 to 348 (EEEGATTVSKTETSQVAPA). Phosphothreonine occurs at positions 335 and 336. S338 bears the Phosphoserine mark. Residues T340 and T342 each carry the phosphothreonine modification. Phosphoserine is present on S343.

The protein belongs to the G-protein coupled receptor 1 family. Opsin subfamily. In terms of assembly, homodimer. May form a complex composed of RHO, GRK1 and RCVRN in a Ca(2+)-dependent manner; RCVRN prevents the interaction between GRK1 and RHO. Interacts with GRK1. Interacts (phosphorylated form) with SAG. Interacts with GNAT1. Interacts with GNAT3. SAG and G-proteins compete for a common binding site. Interacts with PRCD; the interaction promotes PRCD stability. Forms a complex with ASAP1 and ARF4. Forms a complex with ASAP1, RAB11A, Rabin8/RAB3IP, ARF4 and RAB11FIP3; the complex regulates Golgi-to-cilia rhodopsin/RHO transport in photoreceptors. Post-translationally, phosphorylated on some or all of the serine and threonine residues present in the C-terminal region. In terms of processing, contains one covalently linked retinal chromophore. Upon light absorption, the covalently bound 11-cis-retinal is converted to all-trans-retinal. After hydrolysis of the Schiff base and release of the covalently bound all-trans-retinal, active rhodopsin is regenerated by binding of a fresh molecule of 11-cis-retinal.

The protein localises to the membrane. Its subcellular location is the cell projection. It is found in the cilium. The protein resides in the photoreceptor outer segment. Functionally, photoreceptor required for image-forming vision at low light intensity. Required for photoreceptor cell viability after birth. Light-induced isomerization of 11-cis to all-trans retinal triggers a conformational change that activates signaling via G-proteins. Subsequent receptor phosphorylation mediates displacement of the bound G-protein alpha subunit by the arrestin SAG and terminates signaling. This is Rhodopsin (RHO) from Trichechus manatus (Caribbean manatee).